We begin with the raw amino-acid sequence, 162 residues long: UPF0114 protein PSEEN0819 (162 aa).

Transmembrane regions (helical) follow at residues 15–35 (LLAPIYFGLSLGLLALALKFF), 53–73 (LVLVILSLIDMSLVGGLLVMV), and 136–156 (LMWYVIIHMTFVVSAFVMGYL).

This sequence belongs to the UPF0114 family.

The protein resides in the cell membrane. The sequence is that of UPF0114 protein PSEEN0819 from Pseudomonas entomophila (strain L48).